A 1166-amino-acid polypeptide reads, in one-letter code: UDP-N-acetylglucosamine transferase subunit ALG13 (1166 aa).

Residues 1–125 (MKRAFVTVGT…LHKEGHLFYC (125 aa)) form a glycosyltransferase activity region. The deubiquitinase activity stretch occupies residues 126 to 394 (TCRVLSCPAP…GSRRNKHHAL (269 aa)). The OTU domain maps to 225–346 (LFRKVVAKDA…NGHYDSVYSK (122 aa)). The For deubiquitinase activity role is filled by D233. Catalysis depends on C236, which acts as the Nucleophile; for deubiquitinase activity. The active-site For deubiquitinase activity is the H339. A disordered region spans residues 393 to 438 (ALTASVEGSSDQKSSTEDRTEEAAACSSAASTPEGNKQGTERQKVP). The Tudor domain occupies 486-546 (YYFLGDKCQV…RPVNQVALLP (61 aa)). 3 stretches are compositionally biased toward pro residues: residues 921-930 (PPPLPPPPPA), 941-957 (PLPPPPPPPPPPPPPYS), and 1004-1034 (QPQPQPQPQPQPQPQPQPQPQQPQQQQPPPQ). Disordered regions lie at residues 921-966 (PPPL…SDLP) and 998-1056 (QQQL…EQPL).

This sequence belongs to the glycosyltransferase 28 family. As to quaternary structure, forms with ALG14 the active heterodimeric UDP-N-acetylglucosamine transferase complex. In terms of assembly, not able to interact with ALG14 to form an active UDP-N-acetylglucosamine transferase complex.

Its subcellular location is the endoplasmic reticulum membrane. It carries out the reaction an N-acetyl-alpha-D-glucosaminyl-diphospho-di-trans,poly-cis-dolichol + UDP-N-acetyl-alpha-D-glucosamine = an N,N'-diacetylchitobiosyl-diphospho-di-trans,poly-cis-dolichol + UDP + H(+). It participates in protein modification; protein glycosylation. Its function is as follows. Catalytic subunit of the UDP-N-acetylglucosamine transferase complex that operates in the biosynthetic pathway of dolichol-linked oligosaccharides, the glycan precursors employed in protein asparagine (N)-glycosylation. The assembly of dolichol-linked oligosaccharides begins on the cytosolic side of the endoplasmic reticulum membrane and finishes in its lumen. The sequential addition of sugars to dolichol pyrophosphate produces dolichol-linked oligosaccharides containing fourteen sugars, including two GlcNAcs, nine mannoses and three glucoses. Once assembled, the oligosaccharide is transferred from the lipid to nascent proteins by oligosaccharyltransferases. On the cytoplasmic face of the endoplasmic reticulum, the dimeric ALG13/ALG14 complex catalyzes the second step of dolichol pyrophosphate biosynthesis, transferring a beta1,4-linked N-acetylglucosamine (GlcNAc) from UDP-GlcNAc to GlcNAc-pyrophosphatedolichol (Gn-PDol) to produce N,N'-diacetylchitobiosyl diphosphodolichol. N,N'-diacetylchitobiosyl diphosphodolichol is a substrate for ALG1, the following enzyme in the biosynthetic pathway. Functionally, no glycosyltransferase or deubiquitinase activity is detected for this potential multifunctional enzyme. The chain is UDP-N-acetylglucosamine transferase subunit ALG13 from Mus musculus (Mouse).